Reading from the N-terminus, the 378-residue chain is Spermidine/putrescine import ATP-binding protein PotA (378 aa).

The ABC transporter domain occupies 18 to 248 (VLLSGISKSF…PKNLFVAGFI (231 aa)). 50–57 (GPSGCGKT) is a binding site for ATP.

It belongs to the ABC transporter superfamily. Spermidine/putrescine importer (TC 3.A.1.11.1) family. In terms of assembly, the complex is composed of two ATP-binding proteins (PotA), two transmembrane proteins (PotB and PotC) and a solute-binding protein (PotD).

It localises to the cell inner membrane. It carries out the reaction ATP + H2O + polyamine-[polyamine-binding protein]Side 1 = ADP + phosphate + polyamineSide 2 + [polyamine-binding protein]Side 1.. In terms of biological role, part of the ABC transporter complex PotABCD involved in spermidine/putrescine import. Responsible for energy coupling to the transport system. The polypeptide is Spermidine/putrescine import ATP-binding protein PotA (Salmonella paratyphi A (strain ATCC 9150 / SARB42)).